Consider the following 332-residue polypeptide: L-lactate dehydrogenase A chain (332 aa).

Residues 29–57 and arginine 99 each bind NAD(+); that span reads GMVG…MEDK. Residues arginine 106, asparagine 138, and arginine 169 each coordinate substrate. An NAD(+)-binding site is contributed by asparagine 138. Histidine 193 acts as the Proton acceptor in catalysis. Residue threonine 248 coordinates substrate.

This sequence belongs to the LDH/MDH superfamily. LDH family. Homotetramer.

The protein localises to the cytoplasm. The enzyme catalyses (S)-lactate + NAD(+) = pyruvate + NADH + H(+). The protein operates within fermentation; pyruvate fermentation to lactate; (S)-lactate from pyruvate: step 1/1. In terms of biological role, interconverts simultaneously and stereospecifically pyruvate and lactate with concomitant interconversion of NADH and NAD(+). This chain is L-lactate dehydrogenase A chain (ldha), found in Sphyraena idiastes (Pelican barracuda).